Reading from the N-terminus, the 281-residue chain is DegV domain-containing protein (281 aa).

In terms of domain architecture, DegV spans 3 to 280 (WKIVSDSGCD…EGGLLMGYEI (278 aa)). Residues Ser-63 and Ser-91 each coordinate hexadecanoate.

In terms of biological role, may bind long-chain fatty acids, such as palmitate, and may play a role in lipid transport or fatty acid metabolism. This chain is DegV domain-containing protein, found in Streptococcus gordonii.